The sequence spans 168 residues: Large ribosomal subunit protein uL29c (168 aa).

Residues 1–20 (MLAIHSLSSTPCSSGLTSPP) are disordered. The N-terminal 58 residues, 1–58 (MLAIHSLSSTPCSSGLTSPPKSTLLTKSSFHGLRLPSVNLSSSLRLRVQTPPSSVVVM), are a transit peptide targeting the chloroplast.

In terms of assembly, component of the chloroplast large ribosomal subunit (LSU). Mature 70S chloroplast ribosomes of higher plants consist of a small (30S) and a large (50S) subunit. The 30S small subunit contains 1 molecule of ribosomal RNA (16S rRNA) and 24 different proteins. The 50S large subunit contains 3 rRNA molecules (23S, 5S and 4.5S rRNA) and 33 different proteins.

The protein resides in the plastid. Its subcellular location is the chloroplast. Component of the chloroplast ribosome (chloro-ribosome), a dedicated translation machinery responsible for the synthesis of chloroplast genome-encoded proteins, including proteins of the transcription and translation machinery and components of the photosynthetic apparatus. This is Large ribosomal subunit protein uL29c (RPL29) from Spinacia oleracea (Spinach).